A 502-amino-acid polypeptide reads, in one-letter code: ATP synthase subunit alpha (502 aa).

Residue Gly169 to Thr176 coordinates ATP.

It belongs to the ATPase alpha/beta chains family. As to quaternary structure, F-type ATPases have 2 components, CF(1) - the catalytic core - and CF(0) - the membrane proton channel. CF(1) has five subunits: alpha(3), beta(3), gamma(1), delta(1), epsilon(1). CF(0) has three main subunits: a(1), b(2) and c(9-12). The alpha and beta chains form an alternating ring which encloses part of the gamma chain. CF(1) is attached to CF(0) by a central stalk formed by the gamma and epsilon chains, while a peripheral stalk is formed by the delta and b chains. The F(1)F(0) complex interacts with SpoIIIJ and YqjG; YqgA is found in the same complex.

It is found in the cell membrane. Its subcellular location is the membrane raft. The enzyme catalyses ATP + H2O + 4 H(+)(in) = ADP + phosphate + 5 H(+)(out). Functionally, produces ATP from ADP in the presence of a proton gradient across the membrane. The alpha chain is a regulatory subunit. This is ATP synthase subunit alpha from Bacillus subtilis (strain 168).